Reading from the N-terminus, the 122-residue chain is Methylglyoxal synthase (122 aa).

An MGS-like domain is found at 1–122; it reads MRIALIAHDK…DLFIKHLKGK (122 aa). Residues His8, Lys12, 34–37, and 54–55 contribute to the substrate site; these read TGTT and SG. The active-site Proton donor/acceptor is Asp60. Substrate is bound at residue His87.

This sequence belongs to the methylglyoxal synthase family.

It catalyses the reaction dihydroxyacetone phosphate = methylglyoxal + phosphate. Catalyzes the formation of methylglyoxal from dihydroxyacetone phosphate. The chain is Methylglyoxal synthase from Acholeplasma laidlawii (strain PG-8A).